The primary structure comprises 403 residues: Coiled-coil domain-containing glutamate-rich protein 1 (403 aa).

Residues 1 to 11 (MTQTVNEREDP) show a composition bias toward basic and acidic residues. Disordered regions lie at residues 1–23 (MTQT…ASSI), 51–70 (IEYE…GSWF), 134–164 (RPPG…PPID), 202–241 (QQEK…VEED), and 261–350 (PALM…GEQR). The segment covering 137-157 (GRKKRWGRRGRGLRRHPRRSF) has biased composition (basic residues). Residues 209-220 (QQAALRAQQAQE) are compositionally biased toward low complexity. The segment covering 261–271 (PALMQHNQSPT) has biased composition (polar residues). A compositionally biased stretch (acidic residues) spans 275-346 (VEEEEKNVDD…YMLEETGLEE (72 aa)). Residues 292 to 353 (CDEKEESEEE…LEEGEQRAEE (62 aa)) are a coiled coil.

Expressed in testis.

The protein localises to the nucleus. In terms of biological role, regulator of histone epigenetic modifications and chromatin compaction into the sperm head, required for histone-to-protamine (HTP) transition. HTP is a key event in which somatic histones are first replaced by testis-specific histone variants, then transition proteins (TNPs) are incorporated into the spermatid nucleus, and finally protamines (PRMs) replace the TNPs to promote chromatin condensation. This Mus musculus (Mouse) protein is Coiled-coil domain-containing glutamate-rich protein 1 (Ccer1).